Consider the following 268-residue polypeptide: Cytochrome c oxidase subunit 3 (268 aa).

7 helical membrane-spanning segments follow: residues 23 to 43 (ILVS…MHGF), 49 to 69 (WVVF…RDII), 88 to 108 (IGFI…FWAF), 141 to 161 (TILL…LLGG), 166 to 186 (TLLG…CQYM), 203 to 223 (VFYF…IMLG), and 246 to 266 (ILYY…FYWW).

It belongs to the cytochrome c oxidase subunit 3 family. Component of the cytochrome c oxidase (complex IV, CIV), a multisubunit enzyme composed of a catalytic core of 3 subunits and several supernumerary subunits. The complex exists as a monomer or a dimer and forms supercomplexes (SCs) in the inner mitochondrial membrane with ubiquinol-cytochrome c oxidoreductase (cytochrome b-c1 complex, complex III, CIII).

It localises to the mitochondrion inner membrane. It carries out the reaction 4 Fe(II)-[cytochrome c] + O2 + 8 H(+)(in) = 4 Fe(III)-[cytochrome c] + 2 H2O + 4 H(+)(out). Functionally, component of the cytochrome c oxidase, the last enzyme in the mitochondrial electron transport chain which drives oxidative phosphorylation. The respiratory chain contains 3 multisubunit complexes succinate dehydrogenase (complex II, CII), ubiquinol-cytochrome c oxidoreductase (cytochrome b-c1 complex, complex III, CIII) and cytochrome c oxidase (complex IV, CIV), that cooperate to transfer electrons derived from NADH and succinate to molecular oxygen, creating an electrochemical gradient over the inner membrane that drives transmembrane transport and the ATP synthase. Cytochrome c oxidase is the component of the respiratory chain that catalyzes the reduction of oxygen to water. Electrons originating from reduced cytochrome c in the intermembrane space (IMS) are transferred via the dinuclear copper A center (CU(A)) of subunit 2 and heme A of subunit 1 to the active site in subunit 1, a binuclear center (BNC) formed by heme A3 and copper B (CU(B)). The BNC reduces molecular oxygen to 2 water molecules using 4 electrons from cytochrome c in the IMS and 4 protons from the mitochondrial matrix. The chain is Cytochrome c oxidase subunit 3 (COX3) from Yarrowia lipolytica (strain CLIB 122 / E 150) (Yeast).